The following is a 1172-amino-acid chain: MEKHRARALGRDSKASRRKGLPSAPPAGPYELGEKRPKLHLNIRTLTDDMLDKFASIRIPKGSKKERPPLPQLKTVSGSSDYSSVSSETMENNPKSLSENEVLKLFEKMMEDMNLNEDKKAPLREKDFSIKKEMVMQYINTASKTGSLRSSRQISPQEFIHELKMGYTGERLFTYLESLRVSLTSNPVSWVQNFGHEGLGLLLDILEKLINGQIQEKVVKKTQHKVIQCLRALMNTQYGLERIMSDERSLSLLAKAMDPKQPSMMADVVKLLSAVCIVGEESILEEVLEALTSAGEERKIDRFFSIVEGLRHNSVQLQVACMQLINALVTSPDDLDFRLHLRNEFMRCGLKEILPNLKGIKNDGLDIQLKVFDEHKEEDLSEFSHRFEDIRAEFDEASDVYSVVWDTVKETRAEGHFVSILQHLLLIRNDRFIRQQYFKLIDECVSQIVLHRDGIDPDFTYRKRLDLDLSQFVDVCIDQAKLEEWEEKASEHCKKFEKECTDHQETQAQLQKKEAKINELQAELQAFKSQFGALPPGTKIPLQTSAKGEPGPSAFPPAPPALGAGVPPPPPPPPPPPPPLPGMAMPFGGPVPPPPPLGFLGGQNFIPLNLPFGLKPKKEFKPEISMRRLNWLKIGPNEMSENCFWIKVNENKYENKDLLCKLENTFCCLEKEKRDTNDFDEKKVIKKRMKELKFLDPKIAQNLSIFLSSFRVPYEKIRTMILEVDEAQLSESMIQNLMKHLPDEEQLKSLSQFRSDYNSLCEPEQFAVVMSNVKRLRPRLTAILFKLQFEEQVNNINPDIMAVSTACEEIKKSKSFSKLLELVLLMGNYMNAGSRNAQTFGFDLSSLCKLKDTKSADQKTTLLHFLVDVCEEKHPDILPFVDDLAHLDKASRVSVEMLEKSLKQMGRQLLQLEKNLETFPPPEDLHDKFVIKMSSFIITAKEHYGKLSTLLDNMTQLYQSVMSYYAVDTKKVSVEEFFNDLNNFRTSFMQALKENIRKREAAEKEKRARIAKERAEKERLERQQEKKRLLEMKTEGDETGVMDSLLEALQSGAAFRDRRKRTPKLKDIRQSLSPMSQRPVLKVCNHENQKMQLSEGSRPHHSINCTSTRTPVAKELNCNLDTHTSTGRIKAVEKEACNAESNRKKEMELLGSVSKSESVPEVEALLARLRAL.

Residues 1–15 (MEKHRARALGRDSKA) show a composition bias toward basic and acidic residues. The disordered stretch occupies residues 1 to 36 (MEKHRARALGRDSKASRRKGLPSAPPAGPYELGEKR). The Nuclear localization signal signature appears at 16–39 (SRRKGLPSAPPAGPYELGEKRPKL). Thr-47 is subject to Phosphothreonine. Ser-56 bears the Phosphoserine mark. The interval 57-96 (IRIPKGSKKERPPLPQLKTVSGSSDYSSVSSETMENNPKS) is disordered. Positions 77–87 (SGSSDYSSVSS) are enriched in low complexity. The 363-residue stretch at 94-456 (PKSLSENEVL…QIVLHRDGID (363 aa)) folds into the GBD/FH3 domain. Phosphoserine is present on Ser-155. Positions 493-530 (CKKFEKECTDHQETQAQLQKKEAKINELQAELQAFKSQ) form a coiled coil. The interval 535 to 586 (PPGTKIPLQTSAKGEPGPSAFPPAPPALGAGVPPPPPPPPPPPPPLPGMAMP) is disordered. In terms of domain architecture, FH1 spans 541–611 (PLQTSAKGEP…GQNFIPLNLP (71 aa)). Over residues 553–581 (SAFPPAPPALGAGVPPPPPPPPPPPPPLP) the composition is skewed to pro residues. Residues 616–1014 (PKKEFKPEIS…EKRARIAKER (399 aa)) enclose the FH2 domain. The region spanning 1037–1067 (DETGVMDSLLEALQSGAAFRDRRKRTPKLKD) is the DAD domain. Phosphoserine is present on residues Ser-1073 and Ser-1158. The Nuclear export signal motif lies at 1163–1172 (EALLARLRAL).

The protein belongs to the formin homology family. Diaphanous subfamily. Ubiquitinated. As to expression, expressed in testis. Present in Sertoli cells (at protein level).

The protein localises to the cytoplasm. The protein resides in the nucleus. In terms of biological role, actin nucleation and elongation factor required for the assembly of F-actin structures, such as actin cables and stress fibers. Required for cytokinesis, stress fiber formation and transcriptional activation of the serum response factor. Binds to GTP-bound form of Rho and to profilin: acts in a Rho-dependent manner to recruit profilin to the membrane, where it promotes actin polymerization. DFR proteins couple Rho and Src tyrosine kinase during signaling and the regulation of actin dynamics. Also acts as an actin nucleation and elongation factor in the nucleus by promoting nuclear actin polymerization inside the nucleus to drive serum-dependent SRF-MRTFA activity. The protein is Protein diaphanous homolog 3 of Rattus norvegicus (Rat).